Reading from the N-terminus, the 239-residue chain is Cysteine-rich venom protein ENH1 (239 aa).

Positions 1–18 are cleaved as a signal peptide; that stretch reads MIVFILLSLAAVLQQFVA. Residues 37–165 enclose the SCP domain; it reads VDMHNSFRRS…PYNYFYVCQY (129 aa). Disulfide bonds link Cys-74–Cys-152, Cys-91–Cys-166, Cys-147–Cys-163, Cys-185–Cys-192, Cys-188–Cys-197, Cys-210–Cys-228, and Cys-219–Cys-232. A ShKT domain is found at 201–234; the sequence is CPITNTFTNCDSLLQQNSCEDSYIKTNCGASCFC.

The protein belongs to the CRISP family. As to expression, expressed by the venom gland.

The protein localises to the secreted. Functionally, blocks contraction of smooth muscle elicited by high potassium-induced depolarization, but does not block caffeine-stimulated contraction. May target voltage-gated calcium channels on smooth muscle. The chain is Cysteine-rich venom protein ENH1 from Pseudoferania polylepis (Macleay's water snake).